The following is a 323-amino-acid chain: Aldo-keto reductase family 1 member C1 (323 aa).

NADP(+) contacts are provided by residues 20 to 24 (GFGTY) and D50. Y24 is a binding site for substrate. Y55 serves as the catalytic Proton donor. Substrate is bound at residue H117. NADP(+)-binding positions include 166-167 (SN), Q190, and 216-222 (YSALGSH). H222 and W227 together coordinate substrate. Position 270 to 280 (270 to 280 (KSYNEQRIRQN)) interacts with NADP(+).

This sequence belongs to the aldo/keto reductase family. Monomer. Expressed in all tissues tested including liver, prostate, testis, adrenal gland, brain, uterus, mammary gland and keratinocytes. Highest levels found in liver, mammary gland and brain.

It is found in the cytoplasm. It localises to the cytosol. It carries out the reaction a 3alpha-hydroxysteroid + NADP(+) = a 3-oxosteroid + NADPH + H(+). The enzyme catalyses a 3alpha-hydroxysteroid + NAD(+) = a 3-oxosteroid + NADH + H(+). The catalysed reaction is (17R,20S)-17,20-dihydroxypregn-4-en-3-one + NADP(+) = 17alpha-hydroxyprogesterone + NADPH + H(+). It catalyses the reaction (17R,20S)-17,20-dihydroxypregn-4-en-3-one + NAD(+) = 17alpha-hydroxyprogesterone + NADH + H(+). It carries out the reaction (20S)-hydroxypregn-4-en-3-one + NADP(+) = progesterone + NADPH + H(+). The enzyme catalyses (20S)-hydroxypregn-4-en-3-one + NAD(+) = progesterone + NADH + H(+). The catalysed reaction is (1R,2R)-1,2-dihydrobenzene-1,2-diol + NADP(+) = catechol + NADPH + H(+). It catalyses the reaction (S)-indan-1-ol + NAD(+) = indan-1-one + NADH + H(+). It carries out the reaction (S)-indan-1-ol + NADP(+) = indan-1-one + NADPH + H(+). The enzyme catalyses 5alpha-androstane-3alpha,17beta-diol + NADP(+) = 17beta-hydroxy-5alpha-androstan-3-one + NADPH + H(+). The catalysed reaction is 5alpha-androstane-3beta,17beta-diol + NADP(+) = 17beta-hydroxy-5alpha-androstan-3-one + NADPH + H(+). It catalyses the reaction 5alpha-androstane-3alpha,17beta-diol + NAD(+) = 17beta-hydroxy-5alpha-androstan-3-one + NADH + H(+). It carries out the reaction 17beta-hydroxy-5alpha-androstan-3-one + NADP(+) = 5alpha-androstan-3,17-dione + NADPH + H(+). The enzyme catalyses androsterone + NADP(+) = 5alpha-androstan-3,17-dione + NADPH + H(+). The catalysed reaction is androsterone + NADPH + H(+) = 5alpha-androstane-3alpha,17beta-diol + NADP(+). It catalyses the reaction 5alpha-androstane-3alpha,17beta-diol + NAD(+) = androsterone + NADH + H(+). It carries out the reaction 17beta-estradiol + NADP(+) = estrone + NADPH + H(+). The enzyme catalyses 17beta-estradiol + NAD(+) = estrone + NADH + H(+). The catalysed reaction is testosterone + NADP(+) = androst-4-ene-3,17-dione + NADPH + H(+). It catalyses the reaction 20alpha-hydroxy-5beta-pregnan-3-one + NADP(+) = 5beta-pregnan-3,20-dione + NADPH + H(+). It carries out the reaction 3beta-hydroxy-5beta-pregnane-20-one + NADP(+) = 5beta-pregnan-3,20-dione + NADPH + H(+). The enzyme catalyses 3beta-hydroxy-5beta-pregnane-20-one + NADPH + H(+) = 3beta,20alpha-dihydroxy-5beta-pregnane + NADP(+). The catalysed reaction is (3beta,5alpha,17beta)-3-hydroxyandrostan-17-yl sulfate + NADP(+) = 5alpha-dihydrotestosterone sulfate + NADPH + H(+). It functions in the pathway steroid metabolism. With respect to regulation, inhibited by hexestrol with an IC(50) of 9.5 uM, 1,10-phenanthroline with an IC(50) of 55 uM, 1,7-phenanthroline with an IC(50) of 72 uM, flufenamic acid with an IC(50) of 6.0 uM, indomethacin with an IC(50) of 140 uM, ibuprofen with an IC(50) of 950 uM, lithocholic acid with an IC(50) of 25 uM, ursodeoxycholic acid with an IC(50) of 340 uM and chenodeoxycholic acid with an IC(50) of 570 uM. The oxidation reaction is inhibited by low micromolar concentrations of NADPH. In terms of biological role, cytosolic aldo-keto reductase that catalyzes the NADH and NADPH-dependent reduction of ketosteroids to hydroxysteroids. Most probably acts as a reductase in vivo since the oxidase activity measured in vitro is inhibited by physiological concentrations of NADPH. Displays a broad positional specificity acting on positions 3, 17 and 20 of steroids and regulates the metabolism of hormones like estrogens and androgens. May also reduce conjugated steroids such as 5alpha-dihydrotestosterone sulfate. Displays affinity for bile acids. The protein is Aldo-keto reductase family 1 member C1 (AKR1C1) of Homo sapiens (Human).